Reading from the N-terminus, the 308-residue chain is Acetylglutamate kinase (308 aa).

Substrate is bound by residues 67–68 (GG), Arg89, and Asn193.

The protein belongs to the acetylglutamate kinase family. ArgB subfamily.

It localises to the cytoplasm. The catalysed reaction is N-acetyl-L-glutamate + ATP = N-acetyl-L-glutamyl 5-phosphate + ADP. It functions in the pathway amino-acid biosynthesis; L-arginine biosynthesis; N(2)-acetyl-L-ornithine from L-glutamate: step 2/4. Its function is as follows. Catalyzes the ATP-dependent phosphorylation of N-acetyl-L-glutamate. The sequence is that of Acetylglutamate kinase from Nitratidesulfovibrio vulgaris (strain DP4) (Desulfovibrio vulgaris).